The following is a 104-amino-acid chain: Large ribosomal subunit protein uL24 (104 aa).

This sequence belongs to the universal ribosomal protein uL24 family. As to quaternary structure, part of the 50S ribosomal subunit.

Its function is as follows. One of two assembly initiator proteins, it binds directly to the 5'-end of the 23S rRNA, where it nucleates assembly of the 50S subunit. One of the proteins that surrounds the polypeptide exit tunnel on the outside of the subunit. The sequence is that of Large ribosomal subunit protein uL24 from Ectopseudomonas mendocina (strain ymp) (Pseudomonas mendocina).